Consider the following 117-residue polypeptide: Elafin (117 aa).

Residues 1-22 form the signal peptide; the sequence is MRASSFLIVVVFLIAGTLVLEA. Positions 23–60 are excised as a propeptide; the sequence is AVTGVPVKGQDTVKGRVPFNGQDPVKGQVSVKGQDKVK. SVP-1 clotting repeat units lie at residues 29–54 and 55–72; these read VKGQ…VSVK and GQDK…VSTK. Residues 29-72 form a 2 X tandem repeats of SVP-1 like motif region; the sequence is VKGQDTVKGRVPFNGQDPVKGQVSVKGQDKVKAQEPVKGPVSTK. In terms of domain architecture, WAP spans 69 to 117; the sequence is VSTKPGSCPIILIRCAMLNPPNRCLKDTDCPGIKKCCEGSCGMACFVPQ. 4 disulfide bridges follow: Cys-76–Cys-105, Cys-83–Cys-109, Cys-92–Cys-104, and Cys-98–Cys-113.

It is found in the secreted. Its function is as follows. Neutrophil and pancreatic elastase-specific inhibitor of skin. It may prevent elastase-mediated tissue proteolysis. Has been shown to inhibit the alpha-4-beta-2/CHRNA2-CHRNB2 nicotinic acetylcholine receptor and to produce a weak inhibition on Kv11.1/KCNH2/ERG1 and on the transient receptor potential cation channel subfamily V member 1 (TRPV1). The polypeptide is Elafin (PI3) (Homo sapiens (Human)).